Reading from the N-terminus, the 223-residue chain is MSGALKENSGKPSEVEYTHFKDLQALEMERGRLYETIVVTWDDSMVGNAAPIGVLCTGDDTVTLYLYQGTRTVENVLNNGRFTVNVTLDPLIFTDSTLGDLEEDMFSHYRDFLHLRGADAFFTAEVVSVKKLVKRDRFGESELHVVKARAGDVMRAESFRMALNRGIYAVIESLIAYTRAEFSDPLVLRERIAEMNRVARKVGGPREKEAMRRIIQALESKIS.

This sequence to M.jannaschii MJ1453.

This is an uncharacterized protein from Methanothermobacter thermautotrophicus (strain ATCC 29096 / DSM 1053 / JCM 10044 / NBRC 100330 / Delta H) (Methanobacterium thermoautotrophicum).